The sequence spans 220 residues: Probable pterin-4-alpha-carbinolamine dehydratase, chloroplastic (220 aa).

Residues 1–50 (MAATSSSPPCNISASSLLLRQPSRSILKVFGLLPPVSRNNRKLGRLTVTR) constitute a chloroplast transit peptide.

This sequence belongs to the pterin-4-alpha-carbinolamine dehydratase family. In terms of assembly, interacts with SDIR1. Interacts with AIRP2. In terms of processing, ubiquitinated by SDIR1. Ubiquitination leads to its subsequent degradation, thus controlling abscisic acid (ABA) signaling. Ubiquitinated by AIRP2. Ubiquitination leads to its subsequent degradation, thus controlling abscisic acid (ABA) signaling during drought stress.

It is found in the plastid. Its subcellular location is the chloroplast. It localises to the cell membrane. The protein resides in the nucleus. It carries out the reaction (4aS,6R)-4a-hydroxy-L-erythro-5,6,7,8-tetrahydrobiopterin = (6R)-L-erythro-6,7-dihydrobiopterin + H2O. In terms of biological role, involved in tetrahydrobiopterin biosynthesis. Interacts with and acts downstream of the E3 ubiquitin-protein ligase SDIR1 in abscisic acid (ABA) and salt stress signaling. Regulates the expression of the bZIP transcription factor ABI5, which mediates responses to ABA during seed germination and salt stress. The SDIR1-ATP1/SDIRIP1 complex plays an important role in ABA signaling through the ubiquitination pathway. Acts downstream of AIRP2 in regulation of ABA signaling during drought stress. This is Probable pterin-4-alpha-carbinolamine dehydratase, chloroplastic from Arabidopsis thaliana (Mouse-ear cress).